Here is a 420-residue protein sequence, read N- to C-terminus: Histidine--tRNA ligase (420 aa).

This sequence belongs to the class-II aminoacyl-tRNA synthetase family. As to quaternary structure, homodimer.

It is found in the cytoplasm. It catalyses the reaction tRNA(His) + L-histidine + ATP = L-histidyl-tRNA(His) + AMP + diphosphate + H(+). The sequence is that of Histidine--tRNA ligase from Streptomyces avermitilis (strain ATCC 31267 / DSM 46492 / JCM 5070 / NBRC 14893 / NCIMB 12804 / NRRL 8165 / MA-4680).